The chain runs to 238 residues: Complement C1q-like protein 4 (238 aa).

Residues 1-15 (MVLLLLVAIPLLVHS) form the signal peptide. Positions 36-101 (GPRGPGPDGA…PPGPGPGGVA (66 aa)) are disordered. The region spanning 53–96 (PPGAKGEVGRRGKAGLRGPPGPPGPRGPPGEPGRPGPPGPPGPG) is the Collagen-like domain. The span at 71-96 (PPGPPGPRGPPGEPGRPGPPGPPGPG) shows a compositional bias: pro residues. Residues 105–238 (GYVPRIAFYA…TFSGFIIYPD (134 aa)) form the C1q domain.

In terms of assembly, forms homooligomers, predominantly dimers or trimers. Forms heterooligomers with C1QL1, C1QL2 and C1QL3, when proteins are coexpressed; this interaction does not occur after secretion. Interacts with ADGRB3. Highest expression levels in testis and adipose tissue, lower levels in skeletal muscle and kidney.

It is found in the secreted. Functionally, may regulate the number of excitatory synapses that are formed on hippocampus neurons. Has no effect on inhibitory synapses. May inhibit adipocyte differentiation at an early stage of the process. This chain is Complement C1q-like protein 4 (C1QL4), found in Homo sapiens (Human).